The sequence spans 252 residues: Imidazole glycerol phosphate synthase subunit HisF (252 aa).

Active-site residues include aspartate 13 and aspartate 132.

This sequence belongs to the HisA/HisF family. As to quaternary structure, heterodimer of HisH and HisF.

The protein localises to the cytoplasm. The enzyme catalyses 5-[(5-phospho-1-deoxy-D-ribulos-1-ylimino)methylamino]-1-(5-phospho-beta-D-ribosyl)imidazole-4-carboxamide + L-glutamine = D-erythro-1-(imidazol-4-yl)glycerol 3-phosphate + 5-amino-1-(5-phospho-beta-D-ribosyl)imidazole-4-carboxamide + L-glutamate + H(+). It functions in the pathway amino-acid biosynthesis; L-histidine biosynthesis; L-histidine from 5-phospho-alpha-D-ribose 1-diphosphate: step 5/9. IGPS catalyzes the conversion of PRFAR and glutamine to IGP, AICAR and glutamate. The HisF subunit catalyzes the cyclization activity that produces IGP and AICAR from PRFAR using the ammonia provided by the HisH subunit. This Campylobacter fetus subsp. fetus (strain 82-40) protein is Imidazole glycerol phosphate synthase subunit HisF.